The primary structure comprises 265 residues: Molybdenum-pterin-binding protein MopA (265 aa).

Mop domains are found at residues 126-192 and 198-264; these read RTSN…MLAA and RISA…ILAM.

It belongs to the ModE family.

The protein is Molybdenum-pterin-binding protein MopA (mopA) of Rhodobacter capsulatus (Rhodopseudomonas capsulata).